Here is a 183-residue protein sequence, read N- to C-terminus: Adenine phosphoribosyltransferase (183 aa).

Belongs to the purine/pyrimidine phosphoribosyltransferase family. In terms of assembly, homodimer.

Its subcellular location is the cytoplasm. It carries out the reaction AMP + diphosphate = 5-phospho-alpha-D-ribose 1-diphosphate + adenine. It participates in purine metabolism; AMP biosynthesis via salvage pathway; AMP from adenine: step 1/1. Catalyzes a salvage reaction resulting in the formation of AMP, that is energically less costly than de novo synthesis. In Erwinia tasmaniensis (strain DSM 17950 / CFBP 7177 / CIP 109463 / NCPPB 4357 / Et1/99), this protein is Adenine phosphoribosyltransferase.